A 134-amino-acid polypeptide reads, in one-letter code: Large ribosomal subunit protein uL14 (134 aa).

Belongs to the universal ribosomal protein uL14 family. Part of the 50S ribosomal subunit. Forms a cluster with proteins L3 and L19. In the 70S ribosome, L14 and L19 interact and together make contacts with the 16S rRNA in bridges B5 and B8.

Functionally, binds to 23S rRNA. Forms part of two intersubunit bridges in the 70S ribosome. This is Large ribosomal subunit protein uL14 from Deinococcus geothermalis (strain DSM 11300 / CIP 105573 / AG-3a).